The chain runs to 1051 residues: Anucleate primary sterigmata protein B (1051 aa).

Coiled coils occupy residues 10-200 and 239-285; these read IDRL…YAIA and STLV…ELKL. Residues 58-90 are compositionally biased toward basic and acidic residues; sequence KDNQGLKRKIRDLEKQLKDQQSDKESMLNHDPE. Disordered regions lie at residues 58-100 and 141-160; these read KDNQ…DRDH and LKSL…REER. The span at 294 to 303 shows a compositional bias: basic and acidic residues; sequence AGDSILDRSA. Disordered regions lie at residues 294–329, 877–902, 909–928, and 984–1051; these read AGDS…AERE, NHPR…LAER, NTAA…QMTN, and EERD…DIEV. Residues 309–321 are compositionally biased toward polar residues; that stretch reads RPSSSISDRTGQS. Coiled coils occupy residues 325-743 and 787-878; these read DAER…RNSM and RNLL…LQNH. 2 stretches are compositionally biased toward polar residues: residues 877-897 and 916-928; these read NHPR…SSTI and ARSS…QMTN. Positions 950 to 1004 form a coiled coil; sequence NQEVWIKRLHELERRLKAEREARLLDRNGARRRLEERDAENKRLRAQLDRQRLRQ. Basic and acidic residues-rich tracts occupy residues 984 to 1001 and 1028 to 1040; these read EERD…DRQR and EGYR…HSSS.

The protein localises to the cytoplasm. In terms of biological role, involved in regulation of nuclear migration. May be involved in regulating nuclear positioning. The protein is Anucleate primary sterigmata protein B (apsB) of Emericella nidulans (strain FGSC A4 / ATCC 38163 / CBS 112.46 / NRRL 194 / M139) (Aspergillus nidulans).